Reading from the N-terminus, the 408-residue chain is Acetate kinase (408 aa).

Residue Asn-7 coordinates Mg(2+). Residue Lys-14 coordinates ATP. Arg-98 serves as a coordination point for substrate. Asp-155 serves as the catalytic Proton donor/acceptor. Residues 214 to 218 (HLGNG), 289 to 291 (DLR), and 337 to 341 (GVGEN) contribute to the ATP site. Mg(2+) is bound at residue Glu-390.

The protein belongs to the acetokinase family. Homodimer. Mg(2+) is required as a cofactor. Mn(2+) serves as cofactor.

It is found in the cytoplasm. The enzyme catalyses acetate + ATP = acetyl phosphate + ADP. Its pathway is metabolic intermediate biosynthesis; acetyl-CoA biosynthesis; acetyl-CoA from acetate: step 1/2. Catalyzes the formation of acetyl phosphate from acetate and ATP. Can also catalyze the reverse reaction. The sequence is that of Acetate kinase from Cyanothece sp. (strain PCC 7425 / ATCC 29141).